Consider the following 190-residue polypeptide: Imidazoleglycerol-phosphate dehydratase (190 aa).

It belongs to the imidazoleglycerol-phosphate dehydratase family.

It localises to the cytoplasm. The catalysed reaction is D-erythro-1-(imidazol-4-yl)glycerol 3-phosphate = 3-(imidazol-4-yl)-2-oxopropyl phosphate + H2O. Its pathway is amino-acid biosynthesis; L-histidine biosynthesis; L-histidine from 5-phospho-alpha-D-ribose 1-diphosphate: step 6/9. In Campylobacter fetus subsp. fetus (strain 82-40), this protein is Imidazoleglycerol-phosphate dehydratase.